The sequence spans 179 residues: Apoptosis regulator DPV022 (179 aa).

The helical transmembrane segment at 148-170 threads the bilayer; it reads VLITNYLKITIFGAILGITAYYI.

In terms of assembly, interacts with host BAX and BAK1.

The protein resides in the host mitochondrion. The protein localises to the host membrane. Plays a role in the inhibition of host apoptosis by sequestering and inactivating several proapoptotic BCL-2 proteins, including BAK1 and BAX. Prevents the conformational activation of both of them. The chain is Apoptosis regulator DPV022 (DPV022) from Deerpox virus (strain Mule deer/United States/W-848-83/1983) (DPV).